A 48-amino-acid polypeptide reads, in one-letter code: Delta-actitoxin-Bcg1c (48 aa).

3 disulfides stabilise this stretch: Cys-4–Cys-45, Cys-6–Cys-35, and Cys-28–Cys-46.

It is found in the secreted. The protein resides in the nematocyst. Its function is as follows. Binds specifically to voltage-gated sodium channels SCN1A/Nav1.1, thereby delaying their inactivation during signal transduction. The protein is Delta-actitoxin-Bcg1c of Bunodosoma cangicum (Sea anemone).